A 701-amino-acid polypeptide reads, in one-letter code: Probable cytosolic oligopeptidase A (701 aa).

A2 is modified (N-acetylalanine). A coiled-coil region spans residues 148 to 194 (IALEDDKREEFNKIEQELEKLSHKFSENVLDATKKFEKLITDKKEIE). Position 483 (H483) interacts with Zn(2+). Residue E484 is part of the active site. Zn(2+) is bound by residues H487 and E513. A substrate-binding site is contributed by 615 to 621 (HIFAGGY).

It belongs to the peptidase M3 family. Requires Zn(2+) as cofactor.

Its subcellular location is the cytoplasm. It is found in the cytosol. The enzyme catalyses Hydrolysis of oligopeptides, with broad specificity. Gly or Ala commonly occur as P1 or P1' residues, but more distant residues are also important, as is shown by the fact that Z-Gly-Pro-Gly-|-Gly-Pro-Ala is cleaved, but not Z-(Gly)(5).. Its activity is regulated as follows. Inhibited by salicylic acid. Its function is as follows. Oligopeptidase that may be involved in the degradation of proteasome-generated peptides. Binds salicylic acid. The chain is Probable cytosolic oligopeptidase A from Arabidopsis thaliana (Mouse-ear cress).